The sequence spans 646 residues: Threonine--tRNA ligase (646 aa).

The TGS domain occupies 1-61 (MIKITFPDGS…NEDASVVLYK (61 aa)). Residues 242 to 541 (DHRKIGKEMQ…LIEHTAGKFP (300 aa)) form a catalytic region. Residues C337, H388, and H518 each coordinate Zn(2+).

Belongs to the class-II aminoacyl-tRNA synthetase family. Homodimer. Zn(2+) serves as cofactor.

Its subcellular location is the cytoplasm. The enzyme catalyses tRNA(Thr) + L-threonine + ATP = L-threonyl-tRNA(Thr) + AMP + diphosphate + H(+). Catalyzes the attachment of threonine to tRNA(Thr) in a two-step reaction: L-threonine is first activated by ATP to form Thr-AMP and then transferred to the acceptor end of tRNA(Thr). Also edits incorrectly charged L-seryl-tRNA(Thr). The polypeptide is Threonine--tRNA ligase (Bacteroides fragilis (strain YCH46)).